Here is a 343-residue protein sequence, read N- to C-terminus: Lactamase-like protein nscB (343 aa).

Residues H118, H120, D122, and H123 each contribute to the Zn(2+) site. The Proton donor/acceptor role is filled by D122.

It belongs to the metallo-beta-lactamase superfamily. Requires Zn(2+) as cofactor.

It participates in secondary metabolite biosynthesis. Its function is as follows. Lactamase-like protein; part of the gene cluster that mediates the biosynthesis of neosartoricin B, a prenylated anthracenone that probably exhibits T-cell antiproliferative activity, suggestive of a physiological role as an immunosuppressive agent. The non-reducing polyketide synthase nscA probably synthesizes and cyclizes the decaketide backbone. The hydrolase nscB then mediates the product release through hydrolysis followed by spontaneous decarboxylation. The prenyltransferase nscD catalyzes the addition of the dimethylallyl group to the aromatic C5. The FAD-dependent monooxygenase nscC is then responsible for the stereospecific hydroxylation at C2. Neosartoricin B can be converted into two additional compounds neosartoricins C and D. Neosartoricin C is a spirocyclic compound that is cyclized through the attack of C3 hydroxyl on C14, followed by dehydration. On the other hand, neosartoricin D is a further cyclized compound in which attack of C2 on C14 in neosartoricin C results in the formation of the acetal-containing dioxabicyclo-octanone ring. Both of these compounds are novel and possibly represent related metabolites of the gene cluster. This is Lactamase-like protein nscB from Arthroderma otae (strain ATCC MYA-4605 / CBS 113480) (Microsporum canis).